The chain runs to 373 residues: L-threonine 3-dehydrogenase, mitochondrial (373 aa).

NAD(+)-binding positions include 62–67 (GGLGQL), 88–90 (DIR), 106–107 (NI), Tyr-195, Lys-199, and Ile-225. Residue Tyr-195 is the Proton donor/acceptor of the active site.

It belongs to the NAD(P)-dependent epimerase/dehydratase family. As to quaternary structure, homodimer.

It is found in the mitochondrion. It catalyses the reaction L-threonine + NAD(+) = (2S)-2-amino-3-oxobutanoate + NADH + H(+). It functions in the pathway amino-acid degradation; L-threonine degradation via oxydo-reductase pathway; glycine from L-threonine: step 1/2. Catalyzes the NAD(+)-dependent oxidation of L-threonine to 2-amino-3-ketobutyrate, mediating L-threonine catabolism. In Mus musculus (Mouse), this protein is L-threonine 3-dehydrogenase, mitochondrial.